A 256-amino-acid polypeptide reads, in one-letter code: Small ribosomal subunit protein eS1 (256 aa).

Residues 1–18 (MAVGKNKRLSKGKKGLKK) show a composition bias toward basic residues. Positions 1–20 (MAVGKNKRLSKGKKGLKKRT) are disordered. Position 2 is an N-acetylalanine; partial (A2).

It belongs to the eukaryotic ribosomal protein eS1 family. In terms of assembly, component of the small ribosomal subunit. Mature ribosomes consist of a small (40S) and a large (60S) subunit. The 40S subunit contains about 33 different proteins and 1 molecule of RNA (18S). The 60S subunit contains about 49 different proteins and 3 molecules of RNA (25S, 5.8S and 5S).

The protein localises to the cytoplasm. This Talaromyces stipitatus (strain ATCC 10500 / CBS 375.48 / QM 6759 / NRRL 1006) (Penicillium stipitatum) protein is Small ribosomal subunit protein eS1 (rps1).